The following is a 368-amino-acid chain: Zinc finger protein 24 (368 aa).

Lysine 22 participates in a covalent cross-link: Glycyl lysine isopeptide (Lys-Gly) (interchain with G-Cter in SUMO2). Lysine 27 is covalently cross-linked (Glycyl lysine isopeptide (Lys-Gly) (interchain with G-Cter in SUMO1); alternate). Lysine 27 is covalently cross-linked (Glycyl lysine isopeptide (Lys-Gly) (interchain with G-Cter in SUMO2); alternate). The region spanning 52-134 (RQRFRQFGYQ…TVLEDLESEL (83 aa)) is the SCAN box domain. Phosphoserine is present on residues serine 132 and serine 142. Glycyl lysine isopeptide (Lys-Gly) (interchain with G-Cter in SUMO2) cross-links involve residues lysine 147, lysine 177, and lysine 236. The segment at 251 to 273 (HICDECGKHFSQGSALILHQRIH) adopts a C2H2-type 1 zinc-finger fold. Residues 251–301 (HICDECGKHFSQGSALILHQRIHSGEKPYGCVECGKAFSRSSILVQHQRVH) form a necessary and sufficient for nuclear localization region. Serine 274 bears the Phosphoserine mark. Residues lysine 277 and lysine 286 each participate in a glycyl lysine isopeptide (Lys-Gly) (interchain with G-Cter in SUMO2) cross-link. 3 C2H2-type zinc fingers span residues 279–301 (YGCV…QRVH), 307–329 (YKCL…QRIH), and 335–357 (YECV…QRRH). Serine 292 is modified (phosphoserine). Tyrosine 335 carries the phosphotyrosine modification. Residues lysine 361 and lysine 367 each participate in a glycyl lysine isopeptide (Lys-Gly) (interchain with G-Cter in SUMO2) cross-link.

This sequence belongs to the krueppel C2H2-type zinc-finger protein family. Post-translationally, sumoylated. Expressed in many tissues except in heart.

It localises to the nucleus. Its function is as follows. Transcription factor required for myelination of differentiated oligodendrocytes. Required for the conversion of oligodendrocytes from the premyelinating to the myelinating state. In the developing central nervous system (CNS), involved in the maintenance in the progenitor stage by promoting the cell cycle. Specifically binds to the 5'-TCAT-3' DNA sequence. Has transcription repressor activity in vitro. In Homo sapiens (Human), this protein is Zinc finger protein 24 (ZNF24).